Consider the following 695-residue polypeptide: Highly divergent homeobox (695 aa).

2 DNA-binding regions (homeobox) span residues 3-63 and 440-503; these read LRSV…SSKS and ALQD…RLMG. The disordered stretch occupies residues 56-81; it reads RRKMSSKSALESGGAPPGTAHTAPSV. A disordered region spans residues 653 to 695; that stretch reads QQALLSDLPPELEEMDFNHTSPEPDDTSFSLSSLSEKNASDSL. A compositionally biased stretch (polar residues) spans 679-695; that stretch reads TSFSLSSLSEKNASDSL.

Its subcellular location is the nucleus. The polypeptide is Highly divergent homeobox (HDX) (Gallus gallus (Chicken)).